The primary structure comprises 101 residues: Apolipoprotein C-II (101 aa).

Positions 1–22 (MGARHLLALLLVLLVLGFEVQG) are cleaved as a signal peptide. A lipid binding region spans residues 66-74 (TMDEKIRDM). Residues 78 to 101 (STAAVSTYVGIFTDQLLSLLKGED) form a lipoprotein lipase cofactor region.

The protein belongs to the apolipoprotein C2 family. Post-translationally, proapolipoprotein C-II is synthesized as a sialic acid containing glycoprotein which is subsequently desialylated prior to its proteolytic processing. Proapolipoprotein C-II, the major form found in plasma undergoes proteolytic cleavage of its N-terminal hexapeptide to generate apolipoprotein C-II, which occurs as the minor form in plasma.

Its subcellular location is the secreted. Component of chylomicrons, very low-density lipoproteins (VLDL), low-density lipoproteins (LDL), and high-density lipoproteins (HDL) in plasma. Plays an important role in lipoprotein metabolism as an activator of lipoprotein lipase. Both proapolipoprotein C-II and apolipoprotein C-II can activate lipoprotein lipase. This chain is Apolipoprotein C-II (APOC2), found in Tapirus terrestris (Lowland tapir).